Consider the following 266-residue polypeptide: uncharacterized protein (266 aa).

This is an uncharacterized protein from Mycobacterium tuberculosis (strain CDC 1551 / Oshkosh).